Consider the following 316-residue polypeptide: ATP synthase gamma chain (316 aa).

It belongs to the ATPase gamma chain family. F-type ATPases have 2 components, CF(1) - the catalytic core - and CF(0) - the membrane proton channel. CF(1) has five subunits: alpha(3), beta(3), gamma(1), delta(1), epsilon(1). CF(0) has three main subunits: a, b and c.

Its subcellular location is the cellular thylakoid membrane. Its function is as follows. Produces ATP from ADP in the presence of a proton gradient across the membrane. The gamma chain is believed to be important in regulating ATPase activity and the flow of protons through the CF(0) complex. This Prochlorococcus marinus (strain AS9601) protein is ATP synthase gamma chain.